The primary structure comprises 301 residues: Ribosomal RNA small subunit methyltransferase A (301 aa).

Positions 18, 20, 45, 66, 91, and 112 each coordinate S-adenosyl-L-methionine. A disordered region spans residues 267 to 301 (PPEAAPVKEKRRMAKNKMTEPANNNLNENSAPEVD). Residues 287-301 (PANNNLNENSAPEVD) show a composition bias toward polar residues.

It belongs to the class I-like SAM-binding methyltransferase superfamily. rRNA adenine N(6)-methyltransferase family. RsmA subfamily.

It is found in the cytoplasm. It carries out the reaction adenosine(1518)/adenosine(1519) in 16S rRNA + 4 S-adenosyl-L-methionine = N(6)-dimethyladenosine(1518)/N(6)-dimethyladenosine(1519) in 16S rRNA + 4 S-adenosyl-L-homocysteine + 4 H(+). Its function is as follows. Specifically dimethylates two adjacent adenosines (A1518 and A1519) in the loop of a conserved hairpin near the 3'-end of 16S rRNA in the 30S particle. May play a critical role in biogenesis of 30S subunits. In Colwellia psychrerythraea (strain 34H / ATCC BAA-681) (Vibrio psychroerythus), this protein is Ribosomal RNA small subunit methyltransferase A.